The sequence spans 201 residues: Small ribosomal subunit protein uS4c (201 aa).

Positions 89–150 (MRLDNIVFRL…RQKSQAIITK (62 aa)) constitute an S4 RNA-binding domain.

This sequence belongs to the universal ribosomal protein uS4 family. Part of the 30S ribosomal subunit. Contacts protein S5. The interaction surface between S4 and S5 is involved in control of translational fidelity.

It localises to the plastid. It is found in the chloroplast. In terms of biological role, one of the primary rRNA binding proteins, it binds directly to 16S rRNA where it nucleates assembly of the body of the 30S subunit. Its function is as follows. With S5 and S12 plays an important role in translational accuracy. This chain is Small ribosomal subunit protein uS4c (rps4), found in Physcomitrium patens (Spreading-leaved earth moss).